The chain runs to 336 residues: MDLTIPKDYDPRLSIRETEAAIRYIRETFQDEFGKELNLQRMSAPMFVEKSTGLNDNLNGVEQPVSFEMKDMPNETVEIVHSLAKWKRLALKRYGFGMHEGLYTNMNAIRKEEDLDNFHSIYVDQWDWEKIISKDERTEETLKDTVRDIFKVIKHMEHEVWYKFPQAVYHLPDEIHFVTTQELEDRWPDLTPLEREDKIAKELGAVFVMKIGDKLQRSGKPHDGRAPDYDDWSLNGDIIFWYEPLQRRIEVSSMGIRVSPESMKYQLEQADATDREKLPFHKMLLNGELPYTIGGGIGQSRLCMLLLGKAHIGEVQASIWPEDMIKKCEENHIQIL.

Belongs to the class-II aminoacyl-tRNA synthetase family. AsnA subfamily.

The protein localises to the cytoplasm. The enzyme catalyses L-aspartate + NH4(+) + ATP = L-asparagine + AMP + diphosphate + H(+). It participates in amino-acid biosynthesis; L-asparagine biosynthesis; L-asparagine from L-aspartate (ammonia route): step 1/1. The chain is Aspartate--ammonia ligase from Limosilactobacillus reuteri (strain DSM 20016) (Lactobacillus reuteri).